Reading from the N-terminus, the 59-residue chain is Cuticle protein 7 isoform b (59 aa).

Glutamine 1 carries the post-translational modification Pyrrolidone carboxylic acid.

This is Cuticle protein 7 isoform b from Limulus polyphemus (Atlantic horseshoe crab).